Consider the following 466-residue polypeptide: ATP synthase subunit beta (466 aa).

Residue 156-163 (GGAGVGKT) coordinates ATP.

Belongs to the ATPase alpha/beta chains family. As to quaternary structure, F-type ATPases have 2 components, CF(1) - the catalytic core - and CF(0) - the membrane proton channel. CF(1) has five subunits: alpha(3), beta(3), gamma(1), delta(1), epsilon(1). CF(0) has three main subunits: a(1), b(2) and c(9-12). The alpha and beta chains form an alternating ring which encloses part of the gamma chain. CF(1) is attached to CF(0) by a central stalk formed by the gamma and epsilon chains, while a peripheral stalk is formed by the delta and b chains.

It localises to the cell membrane. The catalysed reaction is ATP + H2O + 4 H(+)(in) = ADP + phosphate + 5 H(+)(out). In terms of biological role, produces ATP from ADP in the presence of a proton gradient across the membrane. The catalytic sites are hosted primarily by the beta subunits. The protein is ATP synthase subunit beta of Buchnera aphidicola subsp. Schizaphis graminum (strain Sg).